Consider the following 490-residue polypeptide: GTPase Der (490 aa).

2 EngA-type G domains span residues 3 to 166 (PVVA…MEDL) and 203 to 376 (IKLA…DSST). GTP contacts are provided by residues 9–16 (GRPNVGKS), 56–60 (DTGGI), 118–121 (NKTD), 209–216 (GRPNVGKS), 256–260 (DTAGV), and 321–324 (NKWD). The 85-residue stretch at 377–461 (RRVGTSMLTR…PIRIQFKEGE (85 aa)) folds into the KH-like domain.

It belongs to the TRAFAC class TrmE-Era-EngA-EngB-Septin-like GTPase superfamily. EngA (Der) GTPase family. In terms of assembly, associates with the 50S ribosomal subunit.

In terms of biological role, GTPase that plays an essential role in the late steps of ribosome biogenesis. The sequence is that of GTPase Der from Escherichia coli O157:H7.